Here is a 260-residue protein sequence, read N- to C-terminus: MIFHANPGVIDLGVNIDHVATLRNARGTVYPDPIRAALLAEQAGADLITLHLREDRRHIRDADVRALRPQLATRMNLECALTQEMLDIACEIRPQDVCLVPERREEVTTEGGLDVAGRFEQVKAACAQLAGAGIRVSLFIDADADQIAAAAACGAPVIELHTGRYADAHTPDEQALEFRRIADGVDAGQKHGLVVNAGHGLHYTNVQPIAALPGIKELNIGHAIVAHAVFAGWENAVREMKAIMVAARLGTRYPAAGAPA.

Residue asparagine 15 participates in 3-amino-2-oxopropyl phosphate binding. 1-deoxy-D-xylulose 5-phosphate is bound at residue 17 to 18; the sequence is DH. Arginine 26 lines the 3-amino-2-oxopropyl phosphate pocket. Histidine 51 functions as the Proton acceptor in the catalytic mechanism. Positions 53 and 58 each coordinate 1-deoxy-D-xylulose 5-phosphate. Glutamate 78 serves as the catalytic Proton acceptor. Threonine 108 provides a ligand contact to 1-deoxy-D-xylulose 5-phosphate. The active-site Proton donor is the histidine 199. Residues glycine 200 and 221 to 222 each bind 3-amino-2-oxopropyl phosphate; that span reads GH.

The protein belongs to the PNP synthase family. As to quaternary structure, homooctamer; tetramer of dimers.

It localises to the cytoplasm. It carries out the reaction 3-amino-2-oxopropyl phosphate + 1-deoxy-D-xylulose 5-phosphate = pyridoxine 5'-phosphate + phosphate + 2 H2O + H(+). The protein operates within cofactor biosynthesis; pyridoxine 5'-phosphate biosynthesis; pyridoxine 5'-phosphate from D-erythrose 4-phosphate: step 5/5. Catalyzes the complicated ring closure reaction between the two acyclic compounds 1-deoxy-D-xylulose-5-phosphate (DXP) and 3-amino-2-oxopropyl phosphate (1-amino-acetone-3-phosphate or AAP) to form pyridoxine 5'-phosphate (PNP) and inorganic phosphate. This chain is Pyridoxine 5'-phosphate synthase, found in Cupriavidus necator (strain ATCC 17699 / DSM 428 / KCTC 22496 / NCIMB 10442 / H16 / Stanier 337) (Ralstonia eutropha).